Reading from the N-terminus, the 211-residue chain is 3-demethoxyubiquinol 3-hydroxylase (211 aa).

Residues glutamate 60, glutamate 90, histidine 93, glutamate 142, glutamate 174, and histidine 177 each coordinate Fe cation.

Belongs to the COQ7 family. Fe cation is required as a cofactor.

It is found in the cell membrane. The enzyme catalyses a 5-methoxy-2-methyl-3-(all-trans-polyprenyl)benzene-1,4-diol + AH2 + O2 = a 3-demethylubiquinol + A + H2O. It functions in the pathway cofactor biosynthesis; ubiquinone biosynthesis. Functionally, catalyzes the hydroxylation of 2-nonaprenyl-3-methyl-6-methoxy-1,4-benzoquinol during ubiquinone biosynthesis. The polypeptide is 3-demethoxyubiquinol 3-hydroxylase (Acinetobacter baumannii (strain AB307-0294)).